We begin with the raw amino-acid sequence, 247 residues long: Putative ankyrin repeat protein RBE_1110 (247 aa).

ANK repeat units follow at residues 105–135 (QNKD…CIDY) and 139–171 (EGHN…KLIT).

The polypeptide is Putative ankyrin repeat protein RBE_1110 (Rickettsia bellii (strain RML369-C)).